Reading from the N-terminus, the 477-residue chain is Histidine--tRNA ligase (477 aa).

Belongs to the class-II aminoacyl-tRNA synthetase family. Homodimer.

It localises to the cytoplasm. It carries out the reaction tRNA(His) + L-histidine + ATP = L-histidyl-tRNA(His) + AMP + diphosphate + H(+). The protein is Histidine--tRNA ligase (hisS) of Xanthomonas campestris pv. campestris (strain ATCC 33913 / DSM 3586 / NCPPB 528 / LMG 568 / P 25).